Consider the following 204-residue polypeptide: Ubiquitin-conjugating enzyme E2 T (204 aa).

A UBC core domain is found at 2–152 (QRASRLKKEL…AKQWTEAHAR (151 aa)). Cys-86 (glycyl thioester intermediate) is an active-site residue. Glycyl lysine isopeptide (Lys-Gly) (interchain with G-Cter in ubiquitin) cross-links involve residues Lys-91 and Lys-181. Residues 150-204 (HARQKQKADEEELGTSSEVGDSEESHSTQKRKARPLGGMEKKFSPDVQRVYPGPS) are disordered. Glycyl lysine isopeptide (Lys-Gly) (interchain with G-Cter in SUMO2) cross-links involve residues Lys-190 and Lys-191. The residue at position 193 (Ser-193) is a Phosphoserine.

Belongs to the ubiquitin-conjugating enzyme family. In terms of assembly, interacts with FANCL and BRCA1. Post-translationally, auto-ubiquitinated. Effects of auto-monoubiquitination at Lys-91 and Lys-181 are unclear.

The protein localises to the nucleus. The enzyme catalyses S-ubiquitinyl-[E1 ubiquitin-activating enzyme]-L-cysteine + [E2 ubiquitin-conjugating enzyme]-L-cysteine = [E1 ubiquitin-activating enzyme]-L-cysteine + S-ubiquitinyl-[E2 ubiquitin-conjugating enzyme]-L-cysteine.. Its pathway is protein modification; protein ubiquitination. Its function is as follows. Accepts ubiquitin from the E1 complex and catalyzes its covalent attachment to other proteins. Catalyzes monoubiquitination. Involved in mitomycin-C (MMC)-induced DNA repair: acts as a specific E2 ubiquitin-conjugating enzyme for the Fanconi anemia complex by associating with E3 ubiquitin-protein ligase FANCL and catalyzing monoubiquitination of FANCD2, a key step in the DNA damage pathway. Also mediates monoubiquitination of FANCL and FANCI. May contribute to ubiquitination and degradation of BRCA1. In vitro able to promote polyubiquitination using all 7 ubiquitin Lys residues, but may prefer 'Lys-11'-, 'Lys-27'-, 'Lys-48'- and 'Lys-63'-linked polyubiquitination. The protein is Ubiquitin-conjugating enzyme E2 T (Ube2t) of Mus musculus (Mouse).